A 1294-amino-acid chain; its full sequence is Leucine-rich repeat receptor protein kinase MSP1 (1294 aa).

An N-terminal signal peptide occupies residues 1 to 22 (MVSNSFWLFILLVSFIPISAWA). 5 LRR repeats span residues 88-112 (FQSL…LGNL), 113-136 (QNLQ…LYNL), 138-160 (MLKE…IAQL), 161-184 (QHLT…LGSL), and 186-207 (NLEL…TFGN). N-linked (GlcNAc...) asparagine glycosylation is found at asparagine 198, asparagine 207, and asparagine 220. LRR repeat units follow at residues 232–256 (LTNL…IGQL), 258–280 (NLEL…IGSL), 282–304 (QLKL…ISGL), 305–328 (SSLT…MGEL), 330–352 (NLTQ…LGNC), 353–376 (KKLT…FADL), 378–400 (AIVS…IQKW), 401–422 (KNAR…VLPL), 423–446 (QHLL…ICQA), 447–469 (NSLH…AFKG), 471–493 (TNLT…YLAE), 494–517 (LPLV…LWES), 519–541 (TLLE…IGKL), 542–565 (SVLQ…VGDL), 566–589 (RNLT…LFNC), 591–613 (KLAT…ISHL), 614–637 (TLLD…ICVG), 649–673 (LQHH…IKNC), 675–697 (MVMV…LGEL), 698–721 (TNLT…SGPL), 722–745 (VQLQ…IGQI), 746–770 (LPKI…LLCN), and 772–794 (YLNH…CPDG). Asparagine 330 and asparagine 359 each carry an N-linked (GlcNAc...) asparagine glycan. Asparagine 458 and asparagine 472 each carry an N-linked (GlcNAc...) asparagine glycan. Residues asparagine 567, asparagine 570, and asparagine 601 are each glycosylated (N-linked (GlcNAc...) asparagine). Asparagine 687, asparagine 699, and asparagine 704 each carry an N-linked (GlcNAc...) asparagine glycan. Residues asparagine 805, asparagine 821, and asparagine 832 are each glycosylated (N-linked (GlcNAc...) asparagine). 2 LRR repeats span residues 822-846 (FTQL…LSDL) and 848-870 (SLNY…ICNI). Residues 917-937 (ITICAFTFVIIIVLVLLAVYL) traverse the membrane as a helical segment. One can recognise a Protein kinase domain in the interval 1002–1282 (FSKVHIIGDG…KGLKMTHGME (281 aa)). ATP-binding positions include 1008-1016 (IGDGGFGTV) and lysine 1030. Residue aspartate 1129 is the Proton acceptor of the active site.

The protein belongs to the protein kinase superfamily. Ser/Thr protein kinase family. As to quaternary structure, interacts with TDL1A. In terms of tissue distribution, expressed in anthers and ovules during meiosis.

Its subcellular location is the cell membrane. The enzyme catalyses L-seryl-[protein] + ATP = O-phospho-L-seryl-[protein] + ADP + H(+). It carries out the reaction L-threonyl-[protein] + ATP = O-phospho-L-threonyl-[protein] + ADP + H(+). Receptor-like kinase that plays important roles in restricting the number of cells entering into male and female sporogenesis. Involved in cell specification during anther development and initiation of anther wall formation. The chain is Leucine-rich repeat receptor protein kinase MSP1 from Oryza sativa subsp. japonica (Rice).